The sequence spans 257 residues: Thiazole synthase (257 aa).

The active-site Schiff-base intermediate with DXP is the Lys-96. 1-deoxy-D-xylulose 5-phosphate is bound by residues Gly-157, Ala-184–Gly-185, and Asn-206–Thr-207.

This sequence belongs to the ThiG family. As to quaternary structure, homotetramer. Forms heterodimers with either ThiH or ThiS.

The protein localises to the cytoplasm. It carries out the reaction [ThiS sulfur-carrier protein]-C-terminal-Gly-aminoethanethioate + 2-iminoacetate + 1-deoxy-D-xylulose 5-phosphate = [ThiS sulfur-carrier protein]-C-terminal Gly-Gly + 2-[(2R,5Z)-2-carboxy-4-methylthiazol-5(2H)-ylidene]ethyl phosphate + 2 H2O + H(+). It participates in cofactor biosynthesis; thiamine diphosphate biosynthesis. In terms of biological role, catalyzes the rearrangement of 1-deoxy-D-xylulose 5-phosphate (DXP) to produce the thiazole phosphate moiety of thiamine. Sulfur is provided by the thiocarboxylate moiety of the carrier protein ThiS. In vitro, sulfur can be provided by H(2)S. This Bartonella quintana (strain Toulouse) (Rochalimaea quintana) protein is Thiazole synthase.